The sequence spans 244 residues: Mannose-binding protein C (244 aa).

A signal peptide spans 1–18 (MSIFTSFLLLCVVTVVYA). Residues 38–96 (GLNGFPGKDGRDGAKGEKGEPGQGLRGLQGPPGKVGPTGPPGNPGLKGAVGPKGDRGDR) form the Collagen-like domain. A disordered region spans residues 40–101 (NGFPGKDGRD…DRGDRAEFDT (62 aa)). Residue P43 is modified to 4-hydroxyproline. Basic and acidic residues predominate over residues 45-57 (KDGRDGAKGEKGE). P58, P69, P78, and P81 each carry 4-hydroxyproline. Residues 65-74 (LQGPPGKVGP) are compositionally biased toward low complexity. A compositionally biased stretch (basic and acidic residues) spans 90 to 99 (KGDRGDRAEF). Residues 108–126 (IAALRSELRALRNWVLFSL) are a coiled coil. The 113-residue stretch at 129–241 (KVGKKYFVSS…CSDSFLAICE (113 aa)) folds into the C-type lectin domain. 2 cysteine pairs are disulfide-bonded: C151/C240 and C218/C232. The N-linked (GlcNAc...) asparagine glycan is linked to N210.

As to quaternary structure, oligomeric complex of 3 or more homotrimers. Interacts with MASP1 and MASP2. Interacts with MEP1A and MEP1B and may inhibit their catalytic activity. In terms of processing, hydroxylation on proline residues within the sequence motif, GXPG, is most likely to be 4-hydroxy as this fits the requirement for 4-hydroxylation in vertebrates.

It is found in the secreted. Functionally, calcium-dependent lectin involved in innate immune defense. Binds mannose, fucose and N-acetylglucosamine on different microorganisms and activates the lectin complement pathway. Binds to late apoptotic cells, as well as to apoptotic blebs and to necrotic cells, but not to early apoptotic cells, facilitating their uptake by macrophages. In Mus musculus (Mouse), this protein is Mannose-binding protein C (Mbl2).